A 497-amino-acid polypeptide reads, in one-letter code: Nuclear pore complex protein npp-16 (497 aa).

3 disordered regions span residues 76 to 95 (VPRR…APRK), 210 to 308 (TKKS…SAPK), and 359 to 379 (MENQ…GEYV). Composition is skewed to basic and acidic residues over residues 231 to 240 (KDGDKPKETP) and 250 to 260 (KPAEPSEEPKA). Residues 390-497 (EPDAVLSSKV…FTDKILEVAV (108 aa)) form a ranBD1 region.

In terms of assembly, interacts with importin beta imb-1. Interacts with DNA-directed RNA polymerase III subunit rpc-1. Interacts with TATA-box-binding protein tbp-1. Interacts with GTF3C5 homolog tftc-5. Interacts with GTF3C3 homolog tftc-3.

It localises to the nucleus. The protein resides in the nuclear pore complex. The protein localises to the nucleus membrane. Functionally, component of the nuclear pore complex. Plays a direct role in nuclear protein import. Required for anoxia-induced prophase arrest; may function in concert with cdk-1 to arrest prophase blastomeres in response to anoxia. The protein is Nuclear pore complex protein npp-16 of Caenorhabditis elegans.